The sequence spans 218 residues: MELKVNIAIDGPSGVGKSTVSKLIAKKLNYTFINSGSIYRTIAYHVIKNDIDINNEKDVISSLDSLEFSLSKNEELFYKGENITLILRSEQISISTPVVSKIPEVREFVTSYIQKMTKGKKGFIIDGRDTTFKVMPHADVKIFLWATAEERAQRRVDQNHQLGYNSNYDEVLYEIKKRDHQDMNREHDPLHKTEDSILIDCTNMKIDEVVNKIISLIK.

Position 11–19 (11–19 (GPSGVGKST)) interacts with ATP.

It belongs to the cytidylate kinase family. Type 1 subfamily.

The protein resides in the cytoplasm. The enzyme catalyses CMP + ATP = CDP + ADP. It catalyses the reaction dCMP + ATP = dCDP + ADP. The sequence is that of Cytidylate kinase from Mycoplasmopsis synoviae (strain 53) (Mycoplasma synoviae).